Reading from the N-terminus, the 735-residue chain is F-box and leucine-rich repeat protein 13 (735 aa).

The F-box domain maps to 152–198 (KCDISLLPERAILQIFFYLSLKDVIICGQVNHAWMLMTQLNSLWNAI). LRR repeat units follow at residues 230–254 (GCLLRPKTFRSVSHCRNLQELNVSD), 255–280 (CPTFTDESMRHISEGCPGVLCLNLSN), 281–305 (TTITNRTMRLLPRHFHNLQNLSLAY), 306–333 (CRRFTDKGLQYLNLGNGCHKLIYLDLSG), 334–359 (CTQISVQGFRYIANSCTGIMHLTIND), 360–385 (MPTLTDNCVKALVEKCSRITSLVFTG), 386–406 (APHISDCTFRALSACKLRKIR), 410–435 (NKRVTDASFKFIDKNYPNLSHIYMAD), 436–460 (CKGITDSSLRSLSPLKQLTVLNLAN), 461–488 (CVRIGDMGLKQFLDGPASMRIRELNLSN), 489–514 (CVRLSDASVMKLSERCPNLNYLSLRN), 515–538 (CEHLTAQGIGYIVNIFSLVSIDLS), 539–563 (GTDISNEGLNVLSRHKKLKELSVSE), 564–589 (CYRITDDGIQAFCKSSLILEHLDVSY), 590–615 (CSQLSDMIIKALAIYCINLTSLSIAG), 616–641 (CPKITDSAMEMLSAKCHYLHILDISG), and 642–667 (CVLLTDQILEDLQIGCKQLRILKMQY). Residues 682 to 692 (KVQQQEYNTND) show a composition bias toward polar residues. Residues 682–703 (KVQQQEYNTNDPPRWFGYDREG) form a disordered region.

The protein belongs to the DRC6 family. As to quaternary structure, component of the nexin-dynein regulatory complex (N-DRC). Directly interacts with SKP1 and CUL1. Interacts with TCTE1/DRC5.

Its subcellular location is the cytoplasm. It localises to the cytoskeleton. The protein localises to the flagellum axoneme. The protein resides in the microtubule organizing center. It is found in the centrosome. Its function is as follows. Substrate-recognition component of the SCF (SKP1-CUL1-F-box protein)-type E3 ubiquitin ligase complex. Component of the nexin-dynein regulatory complex (N-DRC), a key regulator of ciliary/flagellar motility which maintains the alignment and integrity of the distal axoneme and regulates microtubule sliding in motile axonemes. Specifically targets CEP192 isoform 3 for ubiquitin-mediated proteolysis and thereby acts as a regulator of microtubule nucleation activity. The polypeptide is F-box and leucine-rich repeat protein 13 (FBXL13) (Homo sapiens (Human)).